Consider the following 223-residue polypeptide: Uracil-DNA glycosylase (223 aa).

Residue aspartate 61 is the Proton acceptor of the active site.

Belongs to the uracil-DNA glycosylase (UDG) superfamily. UNG family.

It localises to the cytoplasm. The enzyme catalyses Hydrolyzes single-stranded DNA or mismatched double-stranded DNA and polynucleotides, releasing free uracil.. Functionally, excises uracil residues from the DNA which can arise as a result of misincorporation of dUMP residues by DNA polymerase or due to deamination of cytosine. The protein is Uracil-DNA glycosylase of Haemophilus ducreyi (strain 35000HP / ATCC 700724).